We begin with the raw amino-acid sequence, 857 residues long: Zinc finger protein 574 (857 aa).

14 consecutive C2H2-type zinc fingers follow at residues 15-37 (YVCS…QQSH), 58-80 (YQCL…QELH), 99-121 (YECP…RYTH), 206-228 (YKCS…QGTH), 297-319 (FSCG…QISH), 324-346 (FSCP…LKSH), 352-374 (YLCV…RRSH), 380-401 (FTCE…RRVH), 428-451 (FHCD…RFVH), 457-479 (HKCP…MLTH), 485-507 (YSCT…RLTH), 513-535 (YKCQ…QYVH), 541-563 (YKCN…QYHH), and 569-591 (YKCQ…QLGH). The segment at 597 to 619 (HRCRECGTNFPSVQRLQDHRCSK) adopts a C2H2-type 15; degenerate zinc-finger fold. 5 consecutive C2H2-type zinc fingers follow at residues 628–651 (LECP…AAQH), 681–703 (LECS…RRIH), 709–731 (YPCP…RRLH), 737–759 (FKCD…KRIH), and 765–787 (HSCP…RKLH). Residues 648-678 (AAQHSGNKRSNVSSGKGTPVLPRNKLKGGGG) form a disordered region. Positions 651 to 663 (HSGNKRSNVSSGK) are enriched in polar residues.

It belongs to the krueppel C2H2-type zinc-finger protein family.

The protein localises to the nucleus. Its function is as follows. May be involved in transcriptional regulation. The protein is Zinc finger protein 574 (znf574) of Xenopus tropicalis (Western clawed frog).